We begin with the raw amino-acid sequence, 249 residues long: MYRLATRRVLAQTTQTFSKRTFSNQGFRAAKASKTNMYLGAGIALIPVIMSINYLNGNHIANEVDENKVEEGKKKAESTGKKEFVEKAEKEAIGKADVKTKVPAEEANPETRTETDKPSEESQKDEENSYEGAAYNPETGEINWDCPCLGGMAHGPCGEEFKEAFACFIYSESEPKGIECIKKFESMRNCFREHPEHYKEELYDDEEQEPLVDVNEKKGDASEQSAETIADDATKVVKEKAKAEDSNTK.

A mitochondrion-targeting transit peptide spans 1-22; sequence MYRLATRRVLAQTTQTFSKRTF. Topologically, residues 23–36 are mitochondrial matrix; sequence SNQGFRAAKASKTN. The chain crosses the membrane as a helical; Signal-anchor for type II membrane protein span at residues 37 to 55; it reads MYLGAGIALIPVIMSINYL. The Mitochondrial intermembrane segment spans residues 56 to 249; it reads NGNHIANEVD…KAKAEDSNTK (194 aa). Positions 95-127 are enriched in basic and acidic residues; the sequence is KADVKTKVPAEEANPETRTETDKPSEESQKDEE. Positions 95 to 136 are disordered; sequence KADVKTKVPAEEANPETRTETDKPSEESQKDEENSYEGAAYN. 3 disulfides stabilise this stretch: Cys146–Cys148, Cys157–Cys190, and Cys167–Cys180. The 45-residue stretch at 154–198 folds into the CHCH domain; sequence HGPCGEEFKEAFACFIYSESEPKGIECIKKFESMRNCFREHPEHY. 2 short sequence motifs (cx9C motif) span residues 157–167 and 180–190; these read CGEEFKEAFAC and CIKKFESMRNC. Residues 202–249 are disordered; sequence LYDDEEQEPLVDVNEKKGDASEQSAETIADDATKVVKEKAKAEDSNTK. Basic and acidic residues predominate over residues 232-249; the sequence is DATKVVKEKAKAEDSNTK.

In terms of assembly, monomer. It depends on Cu(2+) as a cofactor. The cofactor is Zn(2+).

It localises to the mitochondrion inner membrane. In terms of biological role, required for the import and folding of small cysteine-containing proteins (small Tim) in the mitochondrial intermembrane space (IMS). Forms a redox cycle with ERV1 that involves a disulfide relay system. Precursor proteins to be imported into the IMS are translocated in their reduced form into the mitochondria. The oxidized form of MIA40 forms a transient intermolecular disulfide bridge with the reduced precursor protein, resulting in oxidation of the precursor protein that now contains an intramolecular disulfide bond and is able to undergo folding in the IMS. This chain is Mitochondrial intermembrane space import and assembly protein 40 (MIA40), found in Debaryomyces hansenii (strain ATCC 36239 / CBS 767 / BCRC 21394 / JCM 1990 / NBRC 0083 / IGC 2968) (Yeast).